The primary structure comprises 215 residues: Adenylate kinase (215 aa).

An ATP-binding site is contributed by 10–15 (GAGKGT). Positions 30-59 (STGDILRDAVSKGTELGKMAKAIMDRGELV) are NMP. AMP-binding positions include threonine 31, arginine 36, 57-59 (ELV), 82-85 (GYPR), and glutamine 89. The interval 123-160 (NRRVCPNCGKVYNLITLQPKEDEKCDVCGTKLIQRDDD) is LID. An ATP-binding site is contributed by arginine 124. 2 residues coordinate Zn(2+): cysteine 127 and cysteine 130. Residue 133 to 134 (VY) coordinates ATP. Zn(2+) contacts are provided by cysteine 147 and cysteine 150. Arginine 157 and arginine 168 together coordinate AMP. Residue glutamine 196 participates in ATP binding.

This sequence belongs to the adenylate kinase family. In terms of assembly, monomer.

It is found in the cytoplasm. The enzyme catalyses AMP + ATP = 2 ADP. Its pathway is purine metabolism; AMP biosynthesis via salvage pathway; AMP from ADP: step 1/1. In terms of biological role, catalyzes the reversible transfer of the terminal phosphate group between ATP and AMP. Plays an important role in cellular energy homeostasis and in adenine nucleotide metabolism. This chain is Adenylate kinase, found in Petrotoga mobilis (strain DSM 10674 / SJ95).